Consider the following 153-residue polypeptide: MAKLILTQEVAGLGTSGDVVEVKNGYARNYLLPRGFATVWTKGGEKQVESLQKARAARAVANLEDAQAQAAQLQSAPVQLERTAGAEGRLFGAVQTADVAEAIEAAGLGSVDKRSITLPAHIKSVGNHEAQVRLHEDVIATVQLQVVAAKAKK.

It belongs to the bacterial ribosomal protein bL9 family.

Functionally, binds to the 23S rRNA. The chain is Large ribosomal subunit protein bL9 from Micrococcus luteus (strain ATCC 4698 / DSM 20030 / JCM 1464 / CCM 169 / CCUG 5858 / IAM 1056 / NBRC 3333 / NCIMB 9278 / NCTC 2665 / VKM Ac-2230) (Micrococcus lysodeikticus).